Consider the following 713-residue polypeptide: Peroxisomal biogenesis factor 8 (713 aa).

Residues 1 to 31 form a disordered region; the sequence is MYRLGSQGRSIQSQLQNGDSSSGRPLQLQGT. Residues 7–30 are compositionally biased toward polar residues; the sequence is QGRSIQSQLQNGDSSSGRPLQLQG. Positions 711–713 match the Microbody targeting signal motif; it reads AKL.

In terms of assembly, interacts with PEX5 (via N-terminus).

It localises to the peroxisome membrane. In terms of biological role, essential component of the machinery required for the import of both PTS1 and PTS2 (and perhaps all) peroxisomal matrix proteins. Binding of PEX8 to the N-terminus of PEX5 cargo receptor induces a conformational change of the TPR domains and decrease their binding affinity to cargo, facilitating the release of the PTS1 proteins within the peroxisome. This Komagataella phaffii (strain GS115 / ATCC 20864) (Yeast) protein is Peroxisomal biogenesis factor 8.